We begin with the raw amino-acid sequence, 276 residues long: Probable NADH-ubiquinone oxidoreductase 30.4 kDa subunit, mitochondrial (276 aa).

The interval 248–276 is disordered; that stretch reads EPVGEGKDFTPESFKLPTPQPEPEQEEKK.

It belongs to the complex I 30 kDa subunit family. Complex I is composed of about 30 different subunits. This is a component of the iron-sulfur protein fraction.

Its subcellular location is the mitochondrion inner membrane. The catalysed reaction is a ubiquinone + NADH + 5 H(+)(in) = a ubiquinol + NAD(+) + 4 H(+)(out). In terms of biological role, core subunit of the mitochondrial membrane respiratory chain NADH dehydrogenase (Complex I) that is believed to belong to the minimal assembly required for catalysis. Complex I functions in the transfer of electrons from NADH to the respiratory chain. The immediate electron acceptor for the enzyme is believed to be ubiquinone. Essential for N-alkane assimilation. This Candida maltosa (Yeast) protein is Probable NADH-ubiquinone oxidoreductase 30.4 kDa subunit, mitochondrial (ALI1).